Reading from the N-terminus, the 231-residue chain is 2-C-methyl-D-erythritol 4-phosphate cytidylyltransferase (231 aa).

The protein belongs to the IspD/TarI cytidylyltransferase family. IspD subfamily.

It catalyses the reaction 2-C-methyl-D-erythritol 4-phosphate + CTP + H(+) = 4-CDP-2-C-methyl-D-erythritol + diphosphate. The protein operates within isoprenoid biosynthesis; isopentenyl diphosphate biosynthesis via DXP pathway; isopentenyl diphosphate from 1-deoxy-D-xylulose 5-phosphate: step 2/6. Its function is as follows. Catalyzes the formation of 4-diphosphocytidyl-2-C-methyl-D-erythritol from CTP and 2-C-methyl-D-erythritol 4-phosphate (MEP). This chain is 2-C-methyl-D-erythritol 4-phosphate cytidylyltransferase, found in Mycobacterium bovis (strain BCG / Pasteur 1173P2).